Consider the following 101-residue polypeptide: NADH-quinone oxidoreductase subunit K (101 aa).

3 consecutive transmembrane segments (helical) span residues Leu-4 to Leu-24, Ile-30 to Phe-50, and Val-61 to Leu-81.

The protein belongs to the complex I subunit 4L family. NDH-1 is composed of 14 different subunits. Subunits NuoA, H, J, K, L, M, N constitute the membrane sector of the complex.

It is found in the cell inner membrane. It catalyses the reaction a quinone + NADH + 5 H(+)(in) = a quinol + NAD(+) + 4 H(+)(out). NDH-1 shuttles electrons from NADH, via FMN and iron-sulfur (Fe-S) centers, to quinones in the respiratory chain. The immediate electron acceptor for the enzyme in this species is believed to be ubiquinone. Couples the redox reaction to proton translocation (for every two electrons transferred, four hydrogen ions are translocated across the cytoplasmic membrane), and thus conserves the redox energy in a proton gradient. In Azoarcus sp. (strain BH72), this protein is NADH-quinone oxidoreductase subunit K.